A 1360-amino-acid chain; its full sequence is Probable inactive protein kinase DDB_G0270444 (1360 aa).

4 WD repeats span residues 44–83, 109–152, 166–205, and 208–247; these read SSKRPITFVIYDEEGNQFITGEDDFFIRLYNEDGTYIKQL, IRNI…AVYN, TTSAGITALTFDPTNLLVISGTSDGIVRKHSLRERVIMGT, and GHSRGAILNLLLTKHGHLLSSSMDRTIRLWDIDSGKQITG. In terms of domain architecture, Protein kinase spans 636–954; that stretch reads EKSIQTYLSN…IEQALSHPFI (319 aa). A compositionally biased stretch (low complexity) spans 959-979; the sequence is KQQQQQQQQKQQQQQQQQQQQ. 3 disordered regions span residues 959 to 989, 1258 to 1311, and 1331 to 1360; these read KQQQQQQQQKQQQQQQQQQQQEIIPKDDSLT, IISE…VEEE, and EVEEEIEVEEEIEVEEEIQVEDDTDKSNDF. Coiled coils occupy residues 1014–1269 and 1297–1352; these read SKIK…QEGE and NASD…QVED. Residues 1291-1300 show a composition bias toward basic and acidic residues; that stretch reads LERDNKNASD. Acidic residues-rich tracts occupy residues 1301-1311 and 1331-1354; these read HDDEQQFVEEE and EVEEEIEVEEEIEVEEEIQVEDDT.

This sequence belongs to the protein kinase superfamily. CMGC Ser/Thr protein kinase family.

In Dictyostelium discoideum (Social amoeba), this protein is Probable inactive protein kinase DDB_G0270444.